The primary structure comprises 1243 residues: METRAAENTAIFMCKCCNLFSPNQSELLSHVSEKHMEEGVNVDEIIIPLRPLSTPEPPNSSKTGDEFLVMKRKRGRPKGSTKKSSTEEELAENIVSPTEDSPLAPEEGNSLPPSSLECSKCCRKFSNTRQLRKHICIIVLNLGEEEGEAGNESDLELEKKCKEDDREKASKRPRSQKTEKVQKISGKEARQLSGAKKPIISVVLTAHEAIPGATKIVPVEAGPPETGATNSETTSADLVPRRGYQEYAIQQTPYEQPMKSSRLGPTQLKIFTCEYCNKVFKFKHSLQAHLRIHTNEKPYKCPQCSYASAIKANLNVHLRKHTGEKFACDYCSFTCLSKGHLKVHIERVHKKIKQHCRFCKKKYSDVKNLIKHIRDAHDPQDKKVKEALDELCLMTREGKRQLLYDCHICERKFKNELDRDRHMLVHGDKWPFACELCGHGATKYQALELHVRKHPFVYVCAVCRKKFVSSIRLRTHIKEVHGAAQEALVFTSSINQSFCLLEPGGDIQQEALGDQLQLVEEEFALQGVNALKEEACPGDTQLEEGRKEPEAPGEMPAPAVHLASPQAESTALPPCELETTVVSSSDLHSQEVVSDDFLLKNDTSSAEAHAAPEKPPDMQHRSSVQTQGEVITLLLSKAQSAGSDQESHGAQSPLGEGQNMAVLSAGDPDPSRCLRSNPAEASDLLPPVAGGGDTITHQPDSCKAAPEHRSGITAFMKVLNSLQKKQMNTSLCERIRKVYGDLECEYCGKLFWYQVHFDMHVRTHTREHLYYCSQCHYSSITKNCLKRHVIQKHSNILLKCPTDGCDYSTPDKYKLQAHLKVHTALDKRSYSCPVCEKSFSEDRLIKSHIKTNHPEVSMSTISEVLGRRVQLKGLIGKRAMKCPYCDFYFMKNGSDLQRHIWAHEGVKPFKCSLCEYATRSKSNLKAHMNRHSTEKTHLCDMCGKKFKSKGTLKSHKLLHTADGKQFKCTVCDYTAAQKPQLLRHMEQHVSFKPFRCAHCHYSCNISGSLKRHYNRKHPNEEYANVGTGELAAEVLIQQGGLKCPVCSFVYGTKWEFNRHLKNKHGLKVVEIDGDPKWETATEAPEEPSTQYLHITEAEEDVQGTQAAVAALQDLRYTSESGDRLDPTAVNILQQIIELGAETHDATALASVVAMAPGTVTVVKQVTEEEPSSNHTVMIQETVQQASVELAEQHHLVVSSDDVEGIETVTVYTQGGEASEFIVYVQEAMQPVEEQAVEQPAQEL.

The C2H2-type 1 zinc-finger motif lies at 12–35 (FMCKCCNLFSPNQSELLSHVSEKH). Disordered regions lie at residues 51-116 (PLST…PSSL) and 147-189 (GEAG…GKEA). Residues 70–81 (MKRKRGRPKGST) show a composition bias toward basic residues. A C2H2-type 2; degenerate zinc finger spans residues 116 to 141 (LECSKCCRKFSNTRQLRKHICIIVLN). A compositionally biased stretch (basic and acidic residues) spans 156–189 (ELEKKCKEDDREKASKRPRSQKTEKVQKISGKEA). C2H2-type zinc fingers lie at residues 271 to 293 (FTCE…LRIH), 299 to 321 (YKCP…LRKH), 326 to 349 (FACD…ERVH), 354 to 377 (QHCR…RDAH), 404 to 426 (YDCH…MLVH), 432 to 454 (FACE…VRKH), and 458 to 481 (YVCA…KEVH). Zn(2+)-binding residues include Cys273, Cys276, His289, His293, Cys301, Cys304, His317, His321, Cys328, Cys331, His344, His349, Cys356, Cys359, His372, His377, Cys406, Cys409, His422, and His426. Zn(2+) is bound by residues Cys460, Cys463, His476, and His481. Disordered regions lie at residues 534-570 (EACP…AEST), 603-625 (TSSA…SSVQ), and 638-705 (AQSA…CKAA). Residues 610–620 (AAPEKPPDMQH) show a composition bias toward basic and acidic residues. Polar residues predominate over residues 638-650 (AQSAGSDQESHGA). 10 C2H2-type zinc fingers span residues 742–764 (LECE…VRTH), 770–793 (YYCS…IQKH), 798–822 (LKCP…LKVH), 830–853 (YSCP…KTNH), 880–903 (MKCP…IWAH), 909–931 (FKCS…MNRH), 937–959 (HLCD…KLLH), 966–988 (FKCT…MEQH), 994–1017 (FRCA…NRKH), and 1041–1064 (LKCP…KNKH). The Zn(2+) site is built by Cys772, Cys775, His788, His793, Cys800, Cys805, His818, His822, Cys832, Cys835, His848, His853, Cys882, Cys885, His899, His903, Cys911, Cys914, His927, His931, Cys939, Cys942, His955, and Leu958.

In terms of tissue distribution, isoform 1 is strongly expressed in placenta, spleen, kidney, testis and peripheral blood leukocytes. Expressed in CD4+ and CD8+ T-cells, CD19+ B-cells and CB14+ monocytes. Isoform 3 is strongly expressed in placenta, ovary, tonsil, CD19+ B-cells and CD14+ monocytes.

It localises to the nucleus. The protein localises to the cytoplasm. The protein resides in the cytosol. Its function is as follows. May be involved in transcriptional regulation. Overexpression causes down-regulation of a number of genes involved in the immune response. Some genes are also up-regulated. The chain is Zinc finger protein ZFAT (ZFAT) from Homo sapiens (Human).